A 149-amino-acid chain; its full sequence is MQIWVDADACPSVIKEVLFRAAERRQITVTLVANQSVRVPPSPFIKSIRVESGFDVADNEIVKRVSKGELVITADIPLADEVIAKGALALNPRGELYTAENVKARLNMRDFMETLRASGIQSGGPAPLSQADRQAFANQLDRWLARLPK.

The protein belongs to the UPF0178 family.

The sequence is that of UPF0178 protein Sama_3557 from Shewanella amazonensis (strain ATCC BAA-1098 / SB2B).